Reading from the N-terminus, the 308-residue chain is Glutaminase (308 aa).

Substrate contacts are provided by serine 66, asparagine 117, glutamate 162, asparagine 169, tyrosine 193, tyrosine 244, and valine 262.

Belongs to the glutaminase family. As to quaternary structure, homotetramer.

It carries out the reaction L-glutamine + H2O = L-glutamate + NH4(+). The chain is Glutaminase from Natranaerobius thermophilus (strain ATCC BAA-1301 / DSM 18059 / JW/NM-WN-LF).